Consider the following 431-residue polypeptide: Maintenance of mitochondrial morphology protein 1 (431 aa).

Residues 1-103 lie on the Lumenal side of the membrane; sequence MVSALEVKSI…QLISWSFAQG (103 aa). The chain crosses the membrane as a helical span at residues 104–124; the sequence is LIIGQLSVVIFLIFFVKFFIF. Residues 125–431 lie on the Cytoplasmic side of the membrane; sequence TDASSKMDNP…EDESSKTPHS (307 aa). An SMP-LTD domain is found at 192 to 404; that stretch reads SAESLDWFNV…EPRFQSVKLP (213 aa). The disordered stretch occupies residues 412–431; the sequence is NTREEVIHKTEDESSKTPHS.

The protein belongs to the MMM1 family. In terms of assembly, homodimer. Component of the ER-mitochondria encounter structure (ERMES) or MDM complex, composed of MMM1, MDM10, MDM12 and MDM34. An MMM1 homodimer associates with one molecule of MDM12 on each side in a pairwise head-to-tail manner, and the SMP-LTD domains of MMM1 and MDM12 generate a continuous hydrophobic tunnel for phospholipid trafficking.

It is found in the endoplasmic reticulum membrane. Functionally, component of the ERMES/MDM complex, which serves as a molecular tether to connect the endoplasmic reticulum (ER) and mitochondria. Components of this complex are involved in the control of mitochondrial shape and protein biogenesis, and function in nonvesicular lipid trafficking between the ER and mitochondria. The MDM12-MMM1 subcomplex functions in the major beta-barrel assembly pathway that is responsible for biogenesis of all outer membrane beta-barrel proteins, and acts in a late step after the SAM complex. The MDM10-MDM12-MMM1 subcomplex further acts in the TOM40-specific pathway after the action of the MDM12-MMM1 complex. Essential for establishing and maintaining the structure of mitochondria and maintenance of mtDNA nucleoids. The chain is Maintenance of mitochondrial morphology protein 1 from Candida glabrata (strain ATCC 2001 / BCRC 20586 / JCM 3761 / NBRC 0622 / NRRL Y-65 / CBS 138) (Yeast).